The sequence spans 287 residues: 2-dehydro-3-deoxyphosphooctonate aldolase (287 aa).

Belongs to the KdsA family.

The protein resides in the cytoplasm. It carries out the reaction D-arabinose 5-phosphate + phosphoenolpyruvate + H2O = 3-deoxy-alpha-D-manno-2-octulosonate-8-phosphate + phosphate. The protein operates within carbohydrate biosynthesis; 3-deoxy-D-manno-octulosonate biosynthesis; 3-deoxy-D-manno-octulosonate from D-ribulose 5-phosphate: step 2/3. Its pathway is bacterial outer membrane biogenesis; lipopolysaccharide biosynthesis. This Bradyrhizobium sp. (strain ORS 278) protein is 2-dehydro-3-deoxyphosphooctonate aldolase.